An 84-amino-acid polypeptide reads, in one-letter code: Small ribosomal subunit protein eS27w (84 aa).

Residues 39-61 (CQGCFNITTVFSHSQTVVVCGNC) form a C4-type zinc finger.

The protein belongs to the eukaryotic ribosomal protein eS27 family. The cofactor is Zn(2+).

This is Small ribosomal subunit protein eS27w (RPS27D) from Arabidopsis thaliana (Mouse-ear cress).